Reading from the N-terminus, the 171-residue chain is Dual specificity protein phosphatase OPG106 (171 aa).

The Tyrosine-protein phosphatase domain occupies 23 to 171 (SPTIMTRVTN…IIEKYVIDKN (149 aa)). Cys-110 serves as the catalytic Phosphocysteine intermediate.

Belongs to the protein-tyrosine phosphatase family. Non-receptor class dual specificity subfamily. Homodimer.

Its subcellular location is the virion. It localises to the host cytoplasm. The catalysed reaction is O-phospho-L-tyrosyl-[protein] + H2O = L-tyrosyl-[protein] + phosphate. It carries out the reaction O-phospho-L-seryl-[protein] + H2O = L-seryl-[protein] + phosphate. Serine/tyrosine phosphatase which down-regulates cellular antiviral response by dephosphorylating activated host STAT1 and blocking interferon (IFN)-stimulated innate immune responses. Dephosphorylates the OPG144 protein. The sequence is that of Dual specificity protein phosphatase OPG106 (OPG106) from Homo sapiens (Human).